The chain runs to 1902 residues: Plexin-B3 (1902 aa).

Positions 1–34 (MLTDFLQAPVMAPWSPFSLHLLLLFLLLLPLTRA) are cleaved as a signal peptide. The Sema domain occupies 35-461 (HRFSVPNASF…TAQQVDRILV (427 aa)). The Extracellular segment spans residues 35 to 1245 (HRFSVPNASF…MISTFPVEAQ (1211 aa)). N41 is a glycosylation site (N-linked (GlcNAc...) asparagine). 2 disulfide bridges follow: C88–C97 and C122–C130. N-linked (GlcNAc...) asparagine glycosylation occurs at N221. Disulfide bonds link C257/C360, C273/C305, and C323/C347. Residues 353–372 (DSPESYPCGDEHTPSPIAGR) form a disordered region. Residues N416 and N469 are each glycosylated (N-linked (GlcNAc...) asparagine). The 53-residue stretch at 463 to 515 (ACPQFPNCTTCLQARDPLCGWCILQGRCTRRAECGRAVQPNQWLWSYEDNHCL) folds into the PSI 1 domain. 5 disulfide bridges follow: C464-C481, C470-C514, C473-C490, C484-C496, and C551-C569. 2 PSI domains span residues 609–671 (DCSA…EACP) and 776–822 (DCAM…QLCP). 5 N-linked (GlcNAc...) asparagine glycosylation sites follow: N791, N889, N946, N1090, and N1207. 3 IPT/TIG domains span residues 824–913 (PSID…HFTY), 915–1001 (DPVL…FRYT), and 1003–1134 (NPQL…FLYQ). Residues 1246 to 1266 (VGLGMGAAMLIAAVLLLTLMY) form a helical membrane-spanning segment. Topologically, residues 1267 to 1902 (RHKSKQALRD…ALVEYKVTDL (636 aa)) are cytoplasmic.

Belongs to the plexin family. In terms of assembly, binds MET and MST1R. Interacts with RIT2/RIN. Interacts (via cytoplasmic domain) with FSCN1 and RAC1. May form homodimers (via Sema domain). Interacts (via cytoplasmic domain) with ARHGDIA. As to expression, expressed in glioma cells (at protein level). Expressed in glioma cells and oligodendrocyte precursor cells.

It localises to the cell membrane. Receptor for SEMA5A that plays a role in axon guidance, invasive growth and cell migration. Stimulates neurite outgrowth and mediates Ca(2+)/Mg(2+)-dependent cell aggregation. In glioma cells, SEMA5A stimulation of PLXNB3 results in the disassembly of F-actin stress fibers, disruption of focal adhesions and cellular collapse as well as inhibition of cell migration and invasion through ARHGDIA-mediated inactivation of RAC1. This chain is Plexin-B3 (Plxnb3), found in Rattus norvegicus (Rat).